The following is a 537-amino-acid chain: Myosin-binding protein H (537 aa).

The segment covering 1 to 25 (MTGKTAPAAAKKAPAAKKAPAPASK) has biased composition (low complexity). Residues 1–138 (MTGKTAPAAA…KPKEEPPSVP (138 aa)) are disordered. Residues 26–69 (KAPEPAPKEKPAPTPKEGHAPTPKEEHAPPPKEEHAPPPKEEHA) are compositionally biased toward basic and acidic residues. The span at 87 to 104 (EQPAAPAAEHAPTPTHEA) shows a compositional bias: low complexity. Residues 112 to 124 (PPPAAPAEAPAPE) show a composition bias toward pro residues. Residues 137–232 (VPLSLAVEEV…LEQPVLIREI (96 aa)) form the Fibronectin type-III 1 domain. Positions 236 to 324 (PRIRLPRQLR…NGAEDKAILD (89 aa)) constitute an Ig-like C2-type 1 domain. Residues 333 to 428 (PPQNLKLVDV…AAGVAHIKKT (96 aa)) form the Fibronectin type-III 2 domain. The 85-residue stretch at 444-528 (PKFTQPLTDR…VNPLGEASVD (85 aa)) folds into the Ig-like C2-type 2 domain.

The protein belongs to the immunoglobulin superfamily. MyBP family. In terms of tissue distribution, skeletal muscle. Seems to be also expressed in the slow tonic ald muscle. Not detected in gizzard or heart.

Binds to myosin; probably involved in interaction with thick myofilaments in the A-band. This chain is Myosin-binding protein H (MYBPH), found in Gallus gallus (Chicken).